We begin with the raw amino-acid sequence, 100 residues long: Small ribosomal subunit protein uS14 (100 aa).

The protein belongs to the universal ribosomal protein uS14 family. As to quaternary structure, part of the 30S ribosomal subunit. Contacts proteins S3 and S10.

Its function is as follows. Binds 16S rRNA, required for the assembly of 30S particles and may also be responsible for determining the conformation of the 16S rRNA at the A site. The polypeptide is Small ribosomal subunit protein uS14 (Microcystis aeruginosa (strain NIES-843 / IAM M-2473)).